Consider the following 122-residue polypeptide: Small ribosomal subunit protein uS13 (122 aa).

The segment at 94 to 122 is disordered; that stretch reads LSLPVRGQRTKTNSRTRKGKRKTVAGKKK. Over residues 101-122 the composition is skewed to basic residues; the sequence is QRTKTNSRTRKGKRKTVAGKKK.

This sequence belongs to the universal ribosomal protein uS13 family. In terms of assembly, part of the 30S ribosomal subunit. Forms a loose heterodimer with protein S19. Forms two bridges to the 50S subunit in the 70S ribosome.

In terms of biological role, located at the top of the head of the 30S subunit, it contacts several helices of the 16S rRNA. In the 70S ribosome it contacts the 23S rRNA (bridge B1a) and protein L5 of the 50S subunit (bridge B1b), connecting the 2 subunits; these bridges are implicated in subunit movement. Contacts the tRNAs in the A and P-sites. In Chlamydia muridarum (strain MoPn / Nigg), this protein is Small ribosomal subunit protein uS13.